Reading from the N-terminus, the 688-residue chain is Methionine--tRNA ligase (688 aa).

The 'HIGH' region signature appears at 20 to 30; the sequence is PYANGSIHLGH. Cysteine 151, cysteine 154, cysteine 164, and cysteine 167 together coordinate Zn(2+). The 'KMSKS' region signature appears at 337–341; it reads KMSKS. Lysine 340 lines the ATP pocket. Residues 587-688 enclose the tRNA-binding domain; it reads TFAQVDLRIA…EGAQPGMRVM (102 aa).

This sequence belongs to the class-I aminoacyl-tRNA synthetase family. MetG type 1 subfamily. Homodimer. Zn(2+) serves as cofactor.

The protein resides in the cytoplasm. It carries out the reaction tRNA(Met) + L-methionine + ATP = L-methionyl-tRNA(Met) + AMP + diphosphate. Its function is as follows. Is required not only for elongation of protein synthesis but also for the initiation of all mRNA translation through initiator tRNA(fMet) aminoacylation. The protein is Methionine--tRNA ligase of Vibrio parahaemolyticus serotype O3:K6 (strain RIMD 2210633).